Consider the following 168-residue polypeptide: Phosphopantetheine adenylyltransferase (168 aa).

Threonine 11 serves as a coordination point for substrate. ATP-binding positions include 11 to 12 and histidine 19; that span reads TF. The substrate site is built by lysine 43, threonine 75, and arginine 89. ATP-binding positions include 90–92, glutamate 100, and 125–131; these read GIR and WSYMSSS.

It belongs to the bacterial CoaD family. As to quaternary structure, homohexamer. The cofactor is Mg(2+).

It localises to the cytoplasm. It carries out the reaction (R)-4'-phosphopantetheine + ATP + H(+) = 3'-dephospho-CoA + diphosphate. The protein operates within cofactor biosynthesis; coenzyme A biosynthesis; CoA from (R)-pantothenate: step 4/5. Reversibly transfers an adenylyl group from ATP to 4'-phosphopantetheine, yielding dephospho-CoA (dPCoA) and pyrophosphate. The polypeptide is Phosphopantetheine adenylyltransferase (Wigglesworthia glossinidia brevipalpis).